The following is a 354-amino-acid chain: Nicotinate-nucleotide--dimethylbenzimidazole phosphoribosyltransferase (354 aa).

Glutamate 319 (proton acceptor) is an active-site residue.

The protein belongs to the CobT family.

It carries out the reaction 5,6-dimethylbenzimidazole + nicotinate beta-D-ribonucleotide = alpha-ribazole 5'-phosphate + nicotinate + H(+). It functions in the pathway nucleoside biosynthesis; alpha-ribazole biosynthesis; alpha-ribazole from 5,6-dimethylbenzimidazole: step 1/2. Catalyzes the synthesis of alpha-ribazole-5'-phosphate from nicotinate mononucleotide (NAMN) and 5,6-dimethylbenzimidazole (DMB). The chain is Nicotinate-nucleotide--dimethylbenzimidazole phosphoribosyltransferase from Pelodictyon phaeoclathratiforme (strain DSM 5477 / BU-1).